The chain runs to 430 residues: tRNA(Ile)-lysidine synthase (430 aa).

24 to 29 (SGGLDS) contributes to the ATP binding site.

This sequence belongs to the tRNA(Ile)-lysidine synthase family.

It is found in the cytoplasm. The catalysed reaction is cytidine(34) in tRNA(Ile2) + L-lysine + ATP = lysidine(34) in tRNA(Ile2) + AMP + diphosphate + H(+). In terms of biological role, ligates lysine onto the cytidine present at position 34 of the AUA codon-specific tRNA(Ile) that contains the anticodon CAU, in an ATP-dependent manner. Cytidine is converted to lysidine, thus changing the amino acid specificity of the tRNA from methionine to isoleucine. The chain is tRNA(Ile)-lysidine synthase from Haemophilus influenzae (strain PittEE).